Consider the following 539-residue polypeptide: Eukaryotic translation initiation factor 3 subunit L (539 aa).

Residues 306 to 514 (TFSDILLYIQ…IHIADTKVSH (209 aa)) form the PCI domain.

Belongs to the eIF-3 subunit L family. Component of the eukaryotic translation initiation factor 3 (eIF-3) complex. The eIF-3 complex interacts with pix.

It localises to the cytoplasm. Its function is as follows. Component of the eukaryotic translation initiation factor 3 (eIF-3) complex, which is involved in protein synthesis of a specialized repertoire of mRNAs and, together with other initiation factors, stimulates binding of mRNA and methionyl-tRNAi to the 40S ribosome. The eIF-3 complex specifically targets and initiates translation of a subset of mRNAs involved in cell proliferation. This Drosophila melanogaster (Fruit fly) protein is Eukaryotic translation initiation factor 3 subunit L.